A 373-amino-acid chain; its full sequence is Ferroptosis suppressor protein 1 (373 aa).

A lipid anchor (N-myristoyl glycine) is attached at glycine 2. A helical transmembrane segment spans residues valine 13–leucine 29. Residues glycine 17–glycine 21, arginine 53, and valine 81 contribute to the 6-hydroxy-FAD site. Lysine 167 bears the N6-acetyllysine mark. 6-hydroxy-FAD is bound at residue aspartate 284.

The protein belongs to the FAD-dependent oxidoreductase family. Requires 6-hydroxy-FAD as cofactor. Post-translationally, N-myristoylation at Gly-2 mediates the recruitment to lipid droplets and plasma membrane. In terms of processing, acetylation at Lys-167 prevents AIFM2 ubiquitination and degradation, thereby inhibiting ferroptosis. KAT2B mediates acetylation at Lys-167, while HDAC3 removes it. Ubiquitinated. AIFM2 undergoes 'Lys-29'-ubiquitination and proteasomal degradation, which is inhibited by acetylation at Lys-167.

It localises to the lipid droplet. The protein localises to the cell membrane. It is found in the cytoplasm. The protein resides in the mitochondrion membrane. Its subcellular location is the nucleus. It catalyses the reaction ubiquinone-10 + NADH + H(+) = ubiquinol-10 + NAD(+). The enzyme catalyses phylloquinone + NADH + H(+) = phylloquinol + NAD(+). The catalysed reaction is menaquinone-4 + NADH + H(+) = menaquinol-4 + NAD(+). It carries out the reaction menadione + NADH + H(+) = menadiol + NAD(+). The modification by 4-hydroxy-2-nonenal (HNE) adduction in mitochondria results in loss of the oxidoreductase activity and activation of a novel function in mitochondrial oxidative stress signaling. An NAD(P)H-dependent oxidoreductase that acts as a key inhibitor of ferroptosis. At the plasma membrane, catalyzes reduction of coenzyme Q/ubiquinone-10 to ubiquinol-10, a lipophilic radical-trapping antioxidant that prevents lipid oxidative damage and consequently ferroptosis. Acts in parallel to GPX4 to suppress phospholipid peroxidation and ferroptosis. This anti-ferroptotic function is independent of cellular glutathione levels. Also acts as a potent radical-trapping antioxidant by mediating warfarin-resistant vitamin K reduction in the canonical vitamin K cycle: catalyzes NAD(P)H-dependent reduction of vitamin K (phylloquinone, menaquinone-4 and menadione) to hydroquinone forms. Hydroquinones act as potent radical-trapping antioxidants inhibitor of phospholipid peroxidation and ferroptosis. May play a role in mitochondrial stress signaling. Upon oxidative stress, associates with the lipid peroxidation end product 4-hydroxy-2-nonenal (HNE) forming a lipid adduct devoid of oxidoreductase activity, which then translocates from mitochondria into the nucleus triggering DNA damage and cell death. This Taeniopygia guttata (Zebra finch) protein is Ferroptosis suppressor protein 1 (AIFM2).